Consider the following 183-residue polypeptide: Inosine triphosphate pyrophosphatase (183 aa).

ITP is bound at residue 8–13 (TGNKNK). Residue E36 participates in Mg(2+) binding. ITP-binding positions include K48, 64-65 (DT), K81, 140-143 (FGWD), K161, and 166-167 (HR).

It belongs to the HAM1 NTPase family. In terms of assembly, homodimer. The cofactor is Mg(2+). Mn(2+) serves as cofactor.

The protein localises to the cytoplasm. It localises to the nucleus. It catalyses the reaction ITP + H2O = IMP + diphosphate + H(+). The enzyme catalyses dITP + H2O = dIMP + diphosphate + H(+). The catalysed reaction is XTP + H2O = XMP + diphosphate + H(+). Functionally, pyrophosphatase that hydrolyzes non-canonical purine nucleotides such as inosine triphosphate (ITP), deoxyinosine triphosphate (dITP) or xanthosine 5'-triphosphate (XTP) to their respective monophosphate derivatives. The enzyme does not distinguish between the deoxy- and ribose forms. Probably excludes non-canonical purines from RNA and DNA precursor pools, thus preventing their incorporation into RNA and DNA and avoiding chromosomal lesions. This is Inosine triphosphate pyrophosphatase from Emericella nidulans (strain FGSC A4 / ATCC 38163 / CBS 112.46 / NRRL 194 / M139) (Aspergillus nidulans).